Here is a 312-residue protein sequence, read N- to C-terminus: Small ribosomal subunit biogenesis GTPase RsgA (312 aa).

The CP-type G domain maps to 86–245; the sequence is QSFLKRPAVA…LADTPGFNRP (160 aa). GTP is bound by residues 135–138 and 187–195; these read TKID and GPSGVGKTS. 4 residues coordinate Zn(2+): Cys270, Cys275, His277, and Cys283.

This sequence belongs to the TRAFAC class YlqF/YawG GTPase family. RsgA subfamily. Monomer. Associates with 30S ribosomal subunit, binds 16S rRNA. Requires Zn(2+) as cofactor.

The protein localises to the cytoplasm. Its function is as follows. One of several proteins that assist in the late maturation steps of the functional core of the 30S ribosomal subunit. Helps release RbfA from mature subunits. May play a role in the assembly of ribosomal proteins into the subunit. Circularly permuted GTPase that catalyzes slow GTP hydrolysis, GTPase activity is stimulated by the 30S ribosomal subunit. The polypeptide is Small ribosomal subunit biogenesis GTPase RsgA (Prochlorococcus marinus (strain NATL1A)).